The chain runs to 358 residues: Mannonate dehydratase (358 aa).

This sequence belongs to the mannonate dehydratase family. Requires Fe(2+) as cofactor. Mn(2+) serves as cofactor.

The enzyme catalyses D-mannonate = 2-dehydro-3-deoxy-D-gluconate + H2O. The protein operates within carbohydrate metabolism; pentose and glucuronate interconversion. Functionally, catalyzes the dehydration of D-mannonate. This Lactococcus lactis subsp. cremoris (strain MG1363) protein is Mannonate dehydratase.